Consider the following 714-residue polypeptide: MNSGLSRLGIALLAAMFAPALLAADLEKLDVAALPGDRVELKLQFDEPVAAPRGYTIEQPARIALDLPGVQNKLGTKNRELSVGNTRSVTVVEAKDRTRLIINLTALSSYTTRVEGNNLFVVVGNSPAGASVASAAPVKASPAPASYAQPIKPKPYVPAGRAIRNIDFQRGEKGEGNVVIDLSDPTLSPDIQEQGGKIRLDFAKTQLPDALRVRLDVKDFATPVQFVNASAQSDRTSITIEPSGLYDYLVYQTDNRLTVSIKPMTTEDAERRKKDNFAYTGEKLSLNFQDIDVRSVLQLIADFTDLNLVASDTVQGNITLRLQNVPWDQALDLVLKTKGLDKRKLGNVLLVAPADEIAARERQELEAQKQIAELAPLRRELIQVNYAKAADIAKLFQSVTSDGGQEGKEGGRGSITVDDRTNSIIAYQPQERLDELRRIVSQLDIPVRQVMIEARIVEANVGYDKSLGVRWGGAYHKGNWSGYGKDGNIGIKDEDGMNCGPIAGSCTFPTTGTSKSPSPFVDLGAKDATSGIGIGFITDNIILDLQLSAMEKTGNGEIVSQPKVVTSDKETAKILKGSEVPYQEASSSGATSTSFKEAALSLEVTPQITPDNRIIVEVKVTKDAPDYQNMLNGVPPINKNEVNAKILVNDGETIVIGGVFSNEQSKSVEKVPFLGELPYLGRLFRRDTVTDRKNELLVFLTPRIMNNQAIAIGR.

The signal sequence occupies residues M1–A24.

This sequence belongs to the bacterial secretin family. PilQ subfamily.

The protein localises to the cell outer membrane. Functionally, essential for the formation of pili. Involved in the biogenesis of type 4 fimbriae probably by serving as a 'porthole' allowing passage of the fimbrae through the outer membrane. This chain is Fimbrial assembly protein PilQ (pilQ), found in Pseudomonas aeruginosa (strain ATCC 15692 / DSM 22644 / CIP 104116 / JCM 14847 / LMG 12228 / 1C / PRS 101 / PAO1).